Reading from the N-terminus, the 121-residue chain is MDKEKLIAPNQMGYLILKDDGNLLDSGGDLKNDDRSANVIMGLLNLTDSIDEDFMPNSSCERITIDYDQHYYSICMSNRRIYVVKLSKTHTQNGATTSSSSSTSYNDAAEGNNISSSTVLA.

The interval 91–121 (TQNGATTSSSSSTSYNDAAEGNNISSSTVLA) is disordered. The segment covering 112–121 (NNISSSTVLA) has biased composition (polar residues).

It belongs to the LAMTOR4 family. In terms of assembly, part of the Ragulator complex.

The protein resides in the lysosome. Its function is as follows. Regulator of the TOR pathway, a signaling cascade that promotes cell growth in response to growth factors, energy levels, and amino acids. As part of the Ragulator complex, may activate the TOR signaling cascade in response to amino acids. In Drosophila pseudoobscura pseudoobscura (Fruit fly), this protein is Ragulator complex protein LAMTOR4 homolog.